Reading from the N-terminus, the 427-residue chain is Homeotic protein caudal (427 aa).

Residues 104-273 (QLMQQHHHHH…QPQPGKTRTK (170 aa)) are disordered. A compositionally biased stretch (low complexity) spans 116-129 (ASSSSASSGSSSSG). A compositionally biased stretch (gly residues) spans 145-164 (GVGGAGGGGGVGGATDGGPG). Residues 183 to 195 (ITVSGSEISSPGA) are compositionally biased toward polar residues. Residues 209-243 (HLSAVANNNNNNNNNNNSPSTHNNNNNNNSVSNNN) show a composition bias toward low complexity. Threonine 245 carries the phosphothreonine modification. The Antp-type hexapeptide motif lies at 252–257 (YFDWMK). Residues 273 to 332 (KDKYRVVYTDFQRLELEKEYCTSRYITIRRKSELAQTLSLSERQVKIWFQNRRAKERKQN) constitute a DNA-binding region (homeobox).

It belongs to the Caudal homeobox family. As to expression, maternally localized in an anteroposterior gradient in the syncytial blastoderm. Also expressed in the pole cells. Zygotically localized in the primordia of the terminal abdominal segment, the hindgut and in the posterior midgut rudiment. Expressed in the gut, the gonads and parts of the genital disks of third instar larvae (at protein level).

It localises to the nucleus. In terms of biological role, caudal (cad) is one of a number of transcription factors controlling segmentation of the embryo. Further transcriptional regulation via a 5' flanking region containing DNA replication-related elements (DRE) and by dref also regulated by trh and tgo via the CNS midline element. Alongside Bicoid (bcd), caudal forms concentration gradients down the anterior-posterior (A-P) axis providing positional information and subsequent induction of the gap genes. Plays a role in gastrulation/germ band extension, hindgut morphogenesis, positive regulation of cell proliferation, genital disk development and pattern formation. Acts as a key regulator of the Hox gene network and activates transcription via the downstream core promoter element (DPE) relative to the TATA box. Plays a role in the establishment of the hindgut and in the invagination of the hindgut primordium during gastrulation. These effects on the gut are achieved by acting combinatorially at the posterior of the embryo to activate transcription of different targets including fog, fkh and wg. Caudal is involved in regulation of proliferation through transactivation of the E2F gene. Postembryonically its function is mostly restricted to the intestine where it regulates antimicrobial peptide (AMP) levels preserving the normal gut flora. The protein is Homeotic protein caudal (cad) of Drosophila melanogaster (Fruit fly).